Here is a 246-residue protein sequence, read N- to C-terminus: NAD-dependent protein deacylase (246 aa).

Positions 1–237 (MSLPYRHVVI…PRLVEEILAA (237 aa)) constitute a Deacetylase sirtuin-type domain. 13–32 (GAGISAESGIQTFRAQDGLW) contacts NAD(+). Tyr57 and Arg60 together coordinate substrate. 94–97 (QNID) serves as a coordination point for NAD(+). The active-site Proton acceptor is His112. Zn(2+) is bound by residues Cys120 and Cys139. Residues 179-181 (GTS), 205-207 (NLE), and Ala223 contribute to the NAD(+) site.

It belongs to the sirtuin family. Class III subfamily. Zn(2+) is required as a cofactor.

Its subcellular location is the cytoplasm. It carries out the reaction N(6)-acetyl-L-lysyl-[protein] + NAD(+) + H2O = 2''-O-acetyl-ADP-D-ribose + nicotinamide + L-lysyl-[protein]. It catalyses the reaction N(6)-succinyl-L-lysyl-[protein] + NAD(+) + H2O = 2''-O-succinyl-ADP-D-ribose + nicotinamide + L-lysyl-[protein]. Functionally, NAD-dependent lysine deacetylase and desuccinylase that specifically removes acetyl and succinyl groups on target proteins. Modulates the activities of several proteins which are inactive in their acylated form. The polypeptide is NAD-dependent protein deacylase (Vibrio cholerae serotype O1 (strain ATCC 39315 / El Tor Inaba N16961)).